Consider the following 115-residue polypeptide: Ribonuclease P protein component (115 aa).

The protein belongs to the RnpA family. Consists of a catalytic RNA component (M1 or rnpB) and a protein subunit.

The catalysed reaction is Endonucleolytic cleavage of RNA, removing 5'-extranucleotides from tRNA precursor.. Functionally, RNaseP catalyzes the removal of the 5'-leader sequence from pre-tRNA to produce the mature 5'-terminus. It can also cleave other RNA substrates such as 4.5S RNA. The protein component plays an auxiliary but essential role in vivo by binding to the 5'-leader sequence and broadening the substrate specificity of the ribozyme. The polypeptide is Ribonuclease P protein component (Natranaerobius thermophilus (strain ATCC BAA-1301 / DSM 18059 / JW/NM-WN-LF)).